Consider the following 179-residue polypeptide: Probable chemoreceptor glutamine deamidase CheD 2 (179 aa).

This sequence belongs to the CheD family.

The enzyme catalyses L-glutaminyl-[protein] + H2O = L-glutamyl-[protein] + NH4(+). Its function is as follows. Probably deamidates glutamine residues to glutamate on methyl-accepting chemotaxis receptors (MCPs), playing an important role in chemotaxis. The chain is Probable chemoreceptor glutamine deamidase CheD 2 from Ruegeria sp. (strain TM1040) (Silicibacter sp.).